A 274-amino-acid chain; its full sequence is Putative phosphatase BUsg_029 (274 aa).

Asp-8 acts as the Nucleophile in catalysis. Asp-8 provides a ligand contact to Mg(2+). Leu-9 is a binding site for phosphate. Asp-10 contacts Mg(2+). Phosphate-binding positions include 42 to 43 (SG) and Lys-191. Asp-214 contacts Mg(2+). Residue Asn-217 coordinates phosphate.

Belongs to the HAD-like hydrolase superfamily. Cof family. Requires Mg(2+) as cofactor.

The protein is Putative phosphatase BUsg_029 of Buchnera aphidicola subsp. Schizaphis graminum (strain Sg).